We begin with the raw amino-acid sequence, 292 residues long: Xyloglucan endotransglucosylase/hydrolase protein 2 (292 aa).

An N-terminal signal peptide occupies residues 1 to 24 (MNRIRYCFELVSVLFLMFTANARA). Residues 25-219 (RGRGAIDFDV…WAYAPFKAQY (195 aa)) form the GH16 domain. Residue Glu-106 is the Nucleophile of the active site. Catalysis depends on Glu-110, which acts as the Proton donor. Xyloglucan contacts are provided by residues Glu-110, 123–125 (QTN), 133–135 (GRE), 198–199 (NW), and Gly-203. Cystine bridges form between Cys-227–Cys-239 and Cys-275–Cys-288. Arg-280 contacts xyloglucan.

The protein belongs to the glycosyl hydrolase 16 family. XTH group 1 subfamily. Post-translationally, contains at least one intrachain disulfide bond essential for its enzymatic activity.

The protein localises to the secreted. The protein resides in the cell wall. Its subcellular location is the extracellular space. It is found in the apoplast. It catalyses the reaction breaks a beta-(1-&gt;4) bond in the backbone of a xyloglucan and transfers the xyloglucanyl segment on to O-4 of the non-reducing terminal glucose residue of an acceptor, which can be a xyloglucan or an oligosaccharide of xyloglucan.. Functionally, may catalyze xyloglucan endohydrolysis (XEH) and/or endotransglycosylation (XET). Cleaves and religates xyloglucan polymers, an essential constituent of the primary cell wall, and thereby participates in cell wall construction of growing tissues. This Arabidopsis thaliana (Mouse-ear cress) protein is Xyloglucan endotransglucosylase/hydrolase protein 2 (XTH2).